The following is a 228-amino-acid chain: Large ribosomal subunit protein bL25 (228 aa).

Residues 198–228 (AAIAEAQSAEAAEEKAEAEAEATNEKNDTEE) form a disordered region. Over residues 209 to 228 (AEEKAEAEAEATNEKNDTEE) the composition is skewed to basic and acidic residues.

It belongs to the bacterial ribosomal protein bL25 family. CTC subfamily. As to quaternary structure, part of the 50S ribosomal subunit; part of the 5S rRNA/L5/L18/L25 subcomplex. Contacts the 5S rRNA. Binds to the 5S rRNA independently of L5 and L18.

In terms of biological role, this is one of the proteins that binds to the 5S RNA in the ribosome where it forms part of the central protuberance. The chain is Large ribosomal subunit protein bL25 from Methylorubrum populi (strain ATCC BAA-705 / NCIMB 13946 / BJ001) (Methylobacterium populi).